We begin with the raw amino-acid sequence, 267 residues long: Coiled-coil domain-containing protein 172 (267 aa).

Coiled coils occupy residues 24–97 (MREV…CEAI) and 128–191 (LMKE…EETE).

The protein belongs to the CCDC172 family. In terms of assembly, may interact with TEKT2.

The protein localises to the cytoplasm. The protein resides in the cell projection. Its subcellular location is the cilium. The chain is Coiled-coil domain-containing protein 172 (Ccdc172) from Mus musculus (Mouse).